The sequence spans 165 residues: Peptide deformylase (165 aa).

Cysteine 93 and histidine 135 together coordinate Fe cation. The active site involves glutamate 136. A Fe cation-binding site is contributed by histidine 139.

It belongs to the polypeptide deformylase family. The cofactor is Fe(2+).

The catalysed reaction is N-terminal N-formyl-L-methionyl-[peptide] + H2O = N-terminal L-methionyl-[peptide] + formate. Its function is as follows. Removes the formyl group from the N-terminal Met of newly synthesized proteins. Requires at least a dipeptide for an efficient rate of reaction. N-terminal L-methionine is a prerequisite for activity but the enzyme has broad specificity at other positions. The polypeptide is Peptide deformylase (Thermodesulfovibrio yellowstonii (strain ATCC 51303 / DSM 11347 / YP87)).